A 151-amino-acid polypeptide reads, in one-letter code: Cytochrome c-type biogenesis protein CcmE 1 (151 aa).

At 1 to 8 (MNPLRKKR) the chain is on the cytoplasmic side. A helical; Signal-anchor for type II membrane protein transmembrane segment spans residues 9 to 29 (LIIILAILVGVGAAVGLALSA). Topologically, residues 30-151 (LQQNINLFYT…QSAPTPAKEG (122 aa)) are periplasmic. Heme contacts are provided by His-124 and Tyr-128. The disordered stretch occupies residues 131 to 151 (PEVTKALKDSGQSAPTPAKEG).

Belongs to the CcmE/CycJ family.

The protein localises to the cell inner membrane. Functionally, heme chaperone required for the biogenesis of c-type cytochromes. Transiently binds heme delivered by CcmC and transfers the heme to apo-cytochromes in a process facilitated by CcmF and CcmH. This Pseudomonas fluorescens (strain Pf0-1) protein is Cytochrome c-type biogenesis protein CcmE 1.